The chain runs to 202 residues: Guanylate kinase (202 aa).

The region spanning 18–200 (LKPVVVFGPS…AYKQLEAICL (183 aa)) is the Guanylate kinase-like domain. 25–32 (GPSGVGKS) provides a ligand contact to ATP.

The protein belongs to the guanylate kinase family.

It carries out the reaction GMP + ATP = GDP + ADP. Its function is as follows. Essential for recycling GMP and indirectly, cGMP. This chain is Guanylate kinase, found in Schizosaccharomyces pombe (strain 972 / ATCC 24843) (Fission yeast).